The following is a 490-amino-acid chain: Betaine aldehyde dehydrogenase (490 aa).

K(+) contacts are provided by I27 and D93. 150–152 (GAW) is an NAD(+) binding site. K162 functions as the Charge relay system in the catalytic mechanism. 176 to 179 (KPSE) is an NAD(+) binding site. V180 lines the K(+) pocket. Position 230–233 (230–233 (GTDT)) interacts with NAD(+). L246 contacts K(+). The Proton acceptor role is filled by E252. G254, C286, and E387 together coordinate NAD(+). The active-site Nucleophile is C286. Position 286 is a cysteine sulfenic acid (-SOH) (C286). K(+) is bound by residues K457 and G460. E464 functions as the Charge relay system in the catalytic mechanism.

This sequence belongs to the aldehyde dehydrogenase family. Dimer of dimers. The cofactor is K(+).

The catalysed reaction is betaine aldehyde + NAD(+) + H2O = glycine betaine + NADH + 2 H(+). The protein operates within amine and polyamine biosynthesis; betaine biosynthesis via choline pathway; betaine from betaine aldehyde: step 1/1. In terms of biological role, involved in the biosynthesis of the osmoprotectant glycine betaine. Catalyzes the irreversible oxidation of betaine aldehyde to the corresponding acid. The protein is Betaine aldehyde dehydrogenase of Pseudomonas fluorescens (strain ATCC BAA-477 / NRRL B-23932 / Pf-5).